The primary structure comprises 374 residues: DNA integrity scanning protein DisA (374 aa).

The 139-residue stretch at 20–158 (EALMRASLSA…DGERRVLEES (139 aa)) folds into the DAC domain. ATP is bound by residues Gly87, Leu105, and 118–122 (TRHRT).

It belongs to the DisA family. In terms of assembly, homooctamer. Mg(2+) serves as cofactor.

It catalyses the reaction 2 ATP = 3',3'-c-di-AMP + 2 diphosphate. Functionally, participates in a DNA-damage check-point that is active prior to asymmetric division when DNA is damaged. DisA forms globular foci that rapidly scan along the chromosomes during sporulation, searching for lesions. When a lesion is present, DisA pauses at the lesion site. This triggers a cellular response that culminates in a temporary block in sporulation initiation. Also has diadenylate cyclase activity, catalyzing the condensation of 2 ATP molecules into cyclic di-AMP (c-di-AMP). c-di-AMP acts as a signaling molecule that couples DNA integrity with progression of sporulation. The rise in c-di-AMP level generated by DisA while scanning the chromosome, operates as a positive signal that advances sporulation; upon encountering a lesion, the DisA focus arrests at the damaged site and halts c-di-AMP synthesis. This chain is DNA integrity scanning protein DisA, found in Streptomyces griseus subsp. griseus (strain JCM 4626 / CBS 651.72 / NBRC 13350 / KCC S-0626 / ISP 5235).